The sequence spans 495 residues: Ribitol 5-phosphate transferase FKRP (495 aa).

The Cytoplasmic portion of the chain corresponds to 1-6 (MRLTRC). The chain crosses the membrane as a helical span at residues 7–29 (QAALAAAITLNLLVLFYVSWLQH). Residues 30–495 (QPRNSRARGP…PALLSLTGSG (466 aa)) are Lumenal-facing. C168 and C191 are disulfide-bonded. Residues N172 and N209 are each glycosylated (N-linked (GlcNAc...) asparagine). 4 residues coordinate Zn(2+): C289, C296, C317, and C318. Residues 289–318 (CNKETTRCFGTVVGDTPAYLYEERWTPPCC) form a zinc finger loop region. CDP-L-ribitol is bound by residues G345, R352, 359–364 (WDYDVD), 437–438 (QD), and 480–482 (NPQ). 3 residues coordinate Mg(2+): D360, D362, and D364.

This sequence belongs to the LicD transferase family. As to quaternary structure, homodimer; disulfide-linked. Tetramer. Forms a complex composed of FKRP, FKTN/fukutin, and RXYLT1/TMEM5. Also exists as large multimeric protein complexes. May interact with the dystrophin-glycoprotein complex (DGC). Requires Mg(2+) as cofactor. In terms of processing, N-glycosylated. As to expression, expressed in the retina (at protein level). Expressed predominantly in skeletal muscle, placenta, and heart and relatively weakly in brain, lung, liver, kidney, and pancreas.

It is found in the golgi apparatus membrane. It localises to the secreted. Its subcellular location is the cell membrane. The protein resides in the sarcolemma. The protein localises to the rough endoplasmic reticulum. It is found in the cytoplasm. The catalysed reaction is 3-O-[Rib-ol-P-3-beta-D-GalNAc-(1-&gt;3)-beta-D-GlcNAc-(1-&gt;4)-(O-6-P-alpha-D-Man)]-Thr-[protein] + CDP-L-ribitol = 3-O-[Rib-ol-P-Rib-ol-P-3-beta-D-GalNAc-(1-&gt;3)-beta-D-GlcNAc-(1-&gt;4)-(O-6-P-alpha-D-Man)]-Thr-[protein] + CMP + H(+). It participates in protein modification; protein glycosylation. Its function is as follows. Catalyzes the transfer of a ribitol 5-phosphate from CDP-L-ribitol to the ribitol 5-phosphate previously attached by FKTN/fukutin to the phosphorylated O-mannosyl trisaccharide (N-acetylgalactosamine-beta-3-N-acetylglucosamine-beta-4-(phosphate-6-)mannose), a carbohydrate structure present in alpha-dystroglycan (DAG1). This constitutes the second step in the formation of the ribose 5-phosphate tandem repeat which links the phosphorylated O-mannosyl trisaccharide to the ligand binding moiety composed of repeats of 3-xylosyl-alpha-1,3-glucuronic acid-beta-1. The protein is Ribitol 5-phosphate transferase FKRP of Homo sapiens (Human).